A 601-amino-acid polypeptide reads, in one-letter code: RNA polymerase II C-terminal domain phosphatase-like 5 (601 aa).

A disordered region spans residues Met1–Pro20. The span at Ser8 to Pro20 shows a compositional bias: basic and acidic residues. 2 consecutive FCP1 homology domains span residues Leu84–Ser259 and Leu381–Glu553.

Expressed in roots, seedlings, hypocotyls, cotyledons, leaves, siliques and flowers.

It is found in the nucleus. It carries out the reaction O-phospho-L-seryl-[protein] + H2O = L-seryl-[protein] + phosphate. The enzyme catalyses O-phospho-L-threonyl-[protein] + H2O = L-threonyl-[protein] + phosphate. Mediates the dephosphorylation of 'Ser-2' of the heptad repeats YSPTSPS in the C-terminal domain of the largest RNA polymerase II subunit (RPB1). This promotes the activity of RNA polymerase II. Positively regulates abscisic acid (ABA) and drought responses, including the regulation of specific genes expression. In Arabidopsis thaliana (Mouse-ear cress), this protein is RNA polymerase II C-terminal domain phosphatase-like 5.